A 77-amino-acid chain; its full sequence is Tachyplesin-1 (77 aa).

An N-terminal signal peptide occupies residues 1 to 23; it reads MKKLVIALCLMMVLAVMVEEAEA. 2 cysteine pairs are disulfide-bonded: Cys-26–Cys-39 and Cys-30–Cys-35. Position 40 is an arginine amide (Arg-40). Positions 41-77 are excised as a propeptide; the sequence is GKRNEVRQYRDRGYDVRAIPEETFFTRQDEDEDDDEE.

It belongs to the tachyplesin/polyphemusin family. In terms of tissue distribution, hemocytes.

Its subcellular location is the secreted. Its function is as follows. Significantly inhibits the growth of Gram-negative and Gram-positive bacteria. The sequence is that of Tachyplesin-1 from Tachypleus tridentatus (Japanese horseshoe crab).